Consider the following 129-residue polypeptide: Fluoride-specific ion channel FluC (129 aa).

Helical transmembrane passes span 8-28, 36-56, 71-91, and 103-123; these read FFCVAVGGAIGASARFAMVLA, AFPFATLTVNIIGSFFLGLLL, FLGVGLLGAFTTFSTFSVEVV, and ALHIAFNVIICIAAVFAAMML. Residues Gly-78 and Thr-81 each contribute to the Na(+) site.

It belongs to the fluoride channel Fluc/FEX (TC 1.A.43) family.

It localises to the cell inner membrane. It carries out the reaction fluoride(in) = fluoride(out). Its activity is regulated as follows. Na(+) is not transported, but it plays an essential structural role and its presence is essential for fluoride channel function. Fluoride-specific ion channel. Important for reducing fluoride concentration in the cell, thus reducing its toxicity. This Idiomarina loihiensis (strain ATCC BAA-735 / DSM 15497 / L2-TR) protein is Fluoride-specific ion channel FluC.